The sequence spans 392 residues: Alkaline phosphatase L (392 aa).

A signal peptide spans 1 to 23 (MYKRSLIAASLSVAALVSAQAMA).

Belongs to the PstS family. As to quaternary structure, homodimer.

The protein resides in the secreted. It is found in the periplasm. The catalysed reaction is a phosphate monoester + H2O = an alcohol + phosphate. Functionally, has both a phosphomonoesterase and phosphodiesterase activity. This is Alkaline phosphatase L from Pseudomonas aeruginosa.